Reading from the N-terminus, the 297-residue chain is Cell death peptidase (297 aa).

The next 2 membrane-spanning stretches (helical) occupy residues 61 to 82 (IVLT…WVFT) and 149 to 178 (IFLC…AFST).

This sequence belongs to the peptidase U49 family.

The protein localises to the cell membrane. Interacts with a short DNA sequence about one-quarter of the way into the major capsid protein gene 23 of T4; general translation inhibition occurs when this late gene of the virus is expressed. This Escherichia coli (strain K12) protein is Cell death peptidase (lit).